We begin with the raw amino-acid sequence, 570 residues long: Endo-1,4-beta-xylanase 4 (570 aa).

Residues 1-24 (MKRFNYGFFHLVLFLISLLLLGSG) form the signal peptide. N-linked (GlcNAc...) asparagine glycans are attached at residues Asn-92, Asn-190, and Asn-300. The GH10 domain occupies 195-494 (EGSVISIEQI…TQAGDLIDKL (300 aa)). Glu-325 (proton donor) is an active-site residue. Asn-339 is a glycosylation site (N-linked (GlcNAc...) asparagine). Glu-432 serves as the catalytic Nucleophile. Asn-545 is a glycosylation site (N-linked (GlcNAc...) asparagine).

It belongs to the glycosyl hydrolase 10 (cellulase F) family.

It carries out the reaction Endohydrolysis of (1-&gt;4)-beta-D-xylosidic linkages in xylans.. Its pathway is glycan degradation; xylan degradation. Binds to and hydrolyzes insoluble and soluble xylan substrates. This chain is Endo-1,4-beta-xylanase 4, found in Arabidopsis thaliana (Mouse-ear cress).